Consider the following 219-residue polypeptide: 3-dehydroquinate dehydratase (219 aa).

Residues 34-36 (ELR) and R63 contribute to the 3-dehydroquinate site. Catalysis depends on H114, which acts as the Proton donor/acceptor. K139 functions as the Schiff-base intermediate with substrate in the catalytic mechanism. 3-dehydroquinate contacts are provided by R174, T193, and Q197.

This sequence belongs to the type-I 3-dehydroquinase family. As to quaternary structure, homodimer.

It carries out the reaction 3-dehydroquinate = 3-dehydroshikimate + H2O. It participates in metabolic intermediate biosynthesis; chorismate biosynthesis; chorismate from D-erythrose 4-phosphate and phosphoenolpyruvate: step 3/7. Its function is as follows. Involved in the third step of the chorismate pathway, which leads to the biosynthesis of aromatic amino acids. Catalyzes the cis-dehydration of 3-dehydroquinate (DHQ) and introduces the first double bond of the aromatic ring to yield 3-dehydroshikimate. The sequence is that of 3-dehydroquinate dehydratase from Sulfolobus acidocaldarius (strain ATCC 33909 / DSM 639 / JCM 8929 / NBRC 15157 / NCIMB 11770).